Reading from the N-terminus, the 454-residue chain is Bifunctional protein GlmU (454 aa).

Positions 1 to 226 (MALNVVILAA…AIEVEGANNR (226 aa)) are pyrophosphorylase. Residues 8-11 (LAAG), Lys22, Gln73, 78-79 (GT), 100-102 (YGD), Gly137, Glu151, Asn166, and Asn224 contribute to the UDP-N-acetyl-alpha-D-glucosamine site. Residue Asp102 coordinates Mg(2+). Residue Asn224 coordinates Mg(2+). The interval 227-247 (VQLAQLERAYQAREAEKLMIA) is linker. An N-acetyltransferase region spans residues 248 to 454 (GANLRDPSRI…GWQRPVKIKK (207 aa)). UDP-N-acetyl-alpha-D-glucosamine-binding residues include Arg330 and Lys348. The active-site Proton acceptor is the His360. 2 residues coordinate UDP-N-acetyl-alpha-D-glucosamine: Tyr363 and Asn374. Acetyl-CoA contacts are provided by residues Ala377, 383–384 (NY), Ser402, Ala420, and Arg437.

In the N-terminal section; belongs to the N-acetylglucosamine-1-phosphate uridyltransferase family. This sequence in the C-terminal section; belongs to the transferase hexapeptide repeat family. Homotrimer. Mg(2+) is required as a cofactor.

Its subcellular location is the cytoplasm. The catalysed reaction is alpha-D-glucosamine 1-phosphate + acetyl-CoA = N-acetyl-alpha-D-glucosamine 1-phosphate + CoA + H(+). It catalyses the reaction N-acetyl-alpha-D-glucosamine 1-phosphate + UTP + H(+) = UDP-N-acetyl-alpha-D-glucosamine + diphosphate. It functions in the pathway nucleotide-sugar biosynthesis; UDP-N-acetyl-alpha-D-glucosamine biosynthesis; N-acetyl-alpha-D-glucosamine 1-phosphate from alpha-D-glucosamine 6-phosphate (route II): step 2/2. The protein operates within nucleotide-sugar biosynthesis; UDP-N-acetyl-alpha-D-glucosamine biosynthesis; UDP-N-acetyl-alpha-D-glucosamine from N-acetyl-alpha-D-glucosamine 1-phosphate: step 1/1. Its pathway is bacterial outer membrane biogenesis; LPS lipid A biosynthesis. Catalyzes the last two sequential reactions in the de novo biosynthetic pathway for UDP-N-acetylglucosamine (UDP-GlcNAc). The C-terminal domain catalyzes the transfer of acetyl group from acetyl coenzyme A to glucosamine-1-phosphate (GlcN-1-P) to produce N-acetylglucosamine-1-phosphate (GlcNAc-1-P), which is converted into UDP-GlcNAc by the transfer of uridine 5-monophosphate (from uridine 5-triphosphate), a reaction catalyzed by the N-terminal domain. In Shewanella sp. (strain MR-4), this protein is Bifunctional protein GlmU.